The primary structure comprises 863 residues: Glycogen phosphorylase (863 aa).

N6-(pyridoxal phosphate)lysine is present on Lys618.

The protein belongs to the glycogen phosphorylase family. Requires pyridoxal 5'-phosphate as cofactor.

It carries out the reaction [(1-&gt;4)-alpha-D-glucosyl](n) + phosphate = [(1-&gt;4)-alpha-D-glucosyl](n-1) + alpha-D-glucose 1-phosphate. Phosphorylase is an important allosteric enzyme in carbohydrate metabolism. Enzymes from different sources differ in their regulatory mechanisms and in their natural substrates. However, all known phosphorylases share catalytic and structural properties. The protein is Glycogen phosphorylase (glgP) of Mycobacterium bovis (strain ATCC BAA-935 / AF2122/97).